The following is a 607-amino-acid chain: uncharacterized protein (607 aa).

This is an uncharacterized protein from Ictalurid herpesvirus 1 (strain Auburn) (IcHV-1).